The following is a 247-amino-acid chain: OCIA domain-containing protein 1 (247 aa).

In terms of domain architecture, OCIA spans 1 to 112 (MNGRADFREP…KKLENSPLGE (112 aa)). 3 positions are modified to phosphoserine: Ser108, Ser116, and Ser123. Disordered regions lie at residues 113–153 (ALRS…ADNI) and 167–230 (SASM…MQER). 2 stretches are compositionally biased toward polar residues: residues 136–146 (SNVSGQSSFGT) and 168–177 (ASMNESTPTG). 2 stretches are compositionally biased toward basic and acidic residues: residues 192–210 (ESPKRKGVTYEELRSKNRE) and 218–230 (HKTDPSVRPMQER). Ser193 carries the phosphoserine modification.

It belongs to the OCIAD1 family. As to quaternary structure, interacts with OCIAD2. Interacts with STAT3. Expressed at high levels in the brain and at lower levels in the heart, ovary, testis and kidney. Expression is strongest in embryonic stem cells and in the blood vessels.

It is found in the endosome. Functionally, maintains stem cell potency. Increases STAT3 phosphorylation and controls ERK phosphorylation. May act as a scaffold, increasing STAT3 recruitment onto endosomes. This Mus musculus (Mouse) protein is OCIA domain-containing protein 1.